A 472-amino-acid chain; its full sequence is Arginine biosynthesis bifunctional protein ArgJ, mitochondrial (472 aa).

Residues Thr200, Lys229, Thr240, Glu327, Asn467, and Thr472 each contribute to the substrate site. Thr240 serves as the catalytic Nucleophile.

It belongs to the ArgJ family. Heterodimer of an alpha and a beta chain. Post-translationally, the alpha and beta chains are autoproteolytically processed from a single precursor protein within the mitochondrion.

The protein resides in the mitochondrion matrix. The catalysed reaction is N(2)-acetyl-L-ornithine + L-glutamate = N-acetyl-L-glutamate + L-ornithine. It catalyses the reaction L-glutamate + acetyl-CoA = N-acetyl-L-glutamate + CoA + H(+). It functions in the pathway amino-acid biosynthesis; L-arginine biosynthesis; L-ornithine and N-acetyl-L-glutamate from L-glutamate and N(2)-acetyl-L-ornithine (cyclic): step 1/1. The protein operates within amino-acid biosynthesis; L-arginine biosynthesis; N(2)-acetyl-L-ornithine from L-glutamate: step 1/4. Catalyzes two activities which are involved in the cyclic version of arginine biosynthesis: the synthesis of acetylglutamate from glutamate and acetyl-CoA, and of ornithine by transacetylation between acetylornithine and glutamate. The sequence is that of Arginine biosynthesis bifunctional protein ArgJ, mitochondrial from Talaromyces marneffei (strain ATCC 18224 / CBS 334.59 / QM 7333) (Penicillium marneffei).